The following is a 61-amino-acid chain: Metallothionein-1B (61 aa).

A beta region spans residues 1–29; sequence MDPNCSCPTSGSCSCAGSCTCKACRCPSC. Residues cysteine 5, cysteine 7, cysteine 13, cysteine 15, cysteine 19, cysteine 21, cysteine 24, cysteine 26, cysteine 29, cysteine 33, cysteine 34, cysteine 36, cysteine 37, cysteine 41, cysteine 44, cysteine 48, cysteine 50, cysteine 57, cysteine 59, and cysteine 60 each contribute to the a divalent metal cation site. The interval 30–61 is alpha; that stretch reads KKSCCSCCPVGCAKCAQGCVCKGASDKCSCCA.

Belongs to the metallothionein superfamily. Type 1 family.

Functionally, metallothioneins have a high content of cysteine residues that bind various heavy metals; these proteins are transcriptionally regulated by both heavy metals and glucocorticoids. The chain is Metallothionein-1B (MT1B) from Ovis aries (Sheep).